Consider the following 557-residue polypeptide: Elongator complex protein 3 (557 aa).

The Radical SAM core domain occupies 91–381 (RTASGIAVVA…YRVQRDIPMP (291 aa)). Residues Cys108, Cys118, and Cys121 each contribute to the [4Fe-4S] cluster site. Residue Lys173 coordinates acetyl-CoA. Residues 405–557 (TTCRDVRTRE…LDGPYMSKRI (153 aa)) enclose the N-acetyltransferase domain. Lys453 participates in a covalent cross-link: Glycyl lysine isopeptide (Lys-Gly) (interchain with G-Cter in ubiquitin). Residues 485 to 488 (ELHV), 508 to 510 (FGT), and Tyr541 contribute to the acetyl-CoA site.

The protein belongs to the ELP3 family. Component of the elongator complex which consists of ELP1/IKI3, ELP2, ELP3, ELP4, ELP5/IKI1 and ELP6. The elongator complex is composed of two copies of the Elp123 subcomplex (composed of ELP1/IKI3, ELP2 and ELP3) and two copies of the Elp456 subcomplex (composed of ELP4, ELP5/IKI1 and ELP6). The Elp123 subcomplex forms a two-lobed scaffold, which binds the Elp456 subcomplex asymmetrically. In each lobe, ELP2 is tightly sandwiched between ELP1/IKI3 and ELP3. The Elp123 subcomplex binds tRNA through ELP1/IKI3 and ELP3 and can bind 2 tRNAs simultaneously. tRNA-binding induces conformational rearrangements which precisely position the targeted anticodon base in the active site. ELP3 interacts with KTI11/DPH3. ELP3 interacts with KTI12. The Elp456 subcomplex binds tRNA and has ATPase activity. Requires [4Fe-4S] cluster as cofactor.

Its subcellular location is the cytoplasm. The protein localises to the nucleus. It catalyses the reaction uridine(34) in tRNA + acetyl-CoA + S-adenosyl-L-methionine + H2O = 5-(carboxymethyl)uridine(34) in tRNA + 5'-deoxyadenosine + L-methionine + CoA + 2 H(+). The protein operates within tRNA modification; 5-methoxycarbonylmethyl-2-thiouridine-tRNA biosynthesis. Its function is as follows. Catalytic tRNA acetyltransferase subunit of the elongator complex which is required for multiple tRNA modifications, including mcm5U (5-methoxycarbonylmethyl uridine), mcm5s2U (5-methoxycarbonylmethyl-2-thiouridine), and ncm5U (5-carbamoylmethyl uridine). In the elongator complex, acts as a tRNA uridine(34) acetyltransferase, which mediates formation of carboxymethyluridine in the wobble base at position 34 in tRNAs. The complex functions as a gamma-toxin target (TOT); disruption of the complex confers resistance to Kluyveromyces lactis toxin zymocin (pGKL1 killer toxin). May also be involved in sensitivity to Pichia inositovora toxin. Independently, ELP3 may be involved in polarized exocytosis. In Saccharomyces cerevisiae (strain ATCC 204508 / S288c) (Baker's yeast), this protein is Elongator complex protein 3.